The sequence spans 184 residues: Inosine triphosphate pyrophosphatase (184 aa).

An ITP-binding site is contributed by 10 to 15 (TGNVKK). Glu37 contributes to the Mg(2+) binding site. ITP-binding positions include Lys49, 65–66 (DT), Lys82, 141–144 (FGWD), Lys164, and 169–170 (HR).

This sequence belongs to the HAM1 NTPase family. Homodimer. It depends on Mg(2+) as a cofactor. Mn(2+) serves as cofactor.

It is found in the cytoplasm. It carries out the reaction ITP + H2O = IMP + diphosphate + H(+). The catalysed reaction is dITP + H2O = dIMP + diphosphate + H(+). It catalyses the reaction XTP + H2O = XMP + diphosphate + H(+). In terms of biological role, pyrophosphatase that hydrolyzes non-canonical purine nucleotides such as inosine triphosphate (ITP), deoxyinosine triphosphate (dITP) or xanthosine 5'-triphosphate (XTP) to their respective monophosphate derivatives. The enzyme does not distinguish between the deoxy- and ribose forms. Probably excludes non-canonical purines from RNA and DNA precursor pools, thus preventing their incorporation into RNA and DNA and avoiding chromosomal lesions. This is Inosine triphosphate pyrophosphatase from Caenorhabditis elegans.